The following is a 142-amino-acid chain: U1 small nuclear ribonucleoprotein C (142 aa).

A Matrin-type zinc finger spans residues 4-36; it reads YYCDYCDTFLTHDSPSVRKTHNGGRKHKDNVRM.

The protein belongs to the U1 small nuclear ribonucleoprotein C family. In terms of assembly, U1 snRNP is composed of the 7 core Sm proteins B/B', D1, D2, D3, E, F and G that assemble in a heptameric protein ring on the Sm site of the small nuclear RNA to form the core snRNP, and at least 3 U1 snRNP-specific proteins U1-70K, U1-A and U1-C. U1-C interacts with U1 snRNA and the 5' splice-site region of the pre-mRNA.

Its subcellular location is the nucleus. Component of the spliceosomal U1 snRNP, which is essential for recognition of the pre-mRNA 5' splice-site and the subsequent assembly of the spliceosome. U1-C is directly involved in initial 5' splice-site recognition for both constitutive and regulated alternative splicing. The interaction with the 5' splice-site seems to precede base-pairing between the pre-mRNA and the U1 snRNA. Stimulates commitment or early (E) complex formation by stabilizing the base pairing of the 5' end of the U1 snRNA and the 5' splice-site region. The sequence is that of U1 small nuclear ribonucleoprotein C from Caenorhabditis elegans.